The sequence spans 488 residues: Facilitated trehalose transporter Tret1-2 homolog (488 aa).

Topologically, residues 1 to 28 are cytoplasmic; sequence MKILMRADTHVSYSVPAEGTKANFTFSQ. Residues 29-49 traverse the membrane as a helical segment; the sequence is VLAALSVSLCSLVVGFVSAYT. The Extracellular portion of the chain corresponds to 50–72; sequence SPALVSMTDRTITSFEVTKDAGS. The chain crosses the membrane as a helical span at residues 73–93; it reads WVGGIMPLAALAGGITGGPLI. At 94–105 the chain is on the cytoplasmic side; the sequence is EYLGRRNTILAT. A helical transmembrane segment spans residues 106 to 126; that stretch reads AVPFIVSSLLIACAVNVIMIL. The Extracellular segment spans residues 127–129; that stretch reads CGR. The chain crosses the membrane as a helical span at residues 130–150; sequence FLTGFCVGIASLSLPVYLGET. Over 151–160 the chain is Cytoplasmic; it reads LQPEVRGTLG. The helical transmembrane segment at 161–181 threads the bilayer; that stretch reads LLPTALGNIGILVCYVAGSFM. Residue N182 is glycosylated (N-linked (GlcNAc...) asparagine). Residues 182–184 are Extracellular-facing; it reads NWS. A helical membrane pass occupies residues 185–205; that stretch reads ILAFLGAALPVPFLILMIIIP. The Cytoplasmic portion of the chain corresponds to 206 to 268; it reads ETPRWFVNRG…ELFKRINLKP (63 aa). A helical membrane pass occupies residues 269–289; that stretch reads LSISLGLMFFQQFSGINAVIF. Residues 290-305 lie on the Extracellular side of the membrane; the sequence is YTVQIFKDAGSTIDSN. Residues 306 to 326 form a helical membrane-spanning segment; it reads LCTIIVGIVNFFATFMGIILI. The Cytoplasmic segment spans residues 327-332; the sequence is DRLGRK. The chain crosses the membrane as a helical span at residues 333–353; sequence ILLYVSDIAMILTLSILGGFF. Topologically, residues 354–372 are extracellular; sequence YCKAHGPDVSHLGWLPLSC. A helical transmembrane segment spans residues 373–393; that stretch reads FVIYILGFSLGFGPIPWLMMG. The Cytoplasmic segment spans residues 394-402; that stretch reads EILPAKIRG. Residues 403–423 form a helical membrane-spanning segment; sequence PAASVVTAFNWFCTFVVTKTF. Residues 424–433 lie on the Extracellular side of the membrane; the sequence is QDLTVAMGPH. The helical transmembrane segment at 434–454 threads the bilayer; it reads GAFWLFGVVCIVGLFFVIIYV. Topologically, residues 455–488 are cytoplasmic; it reads PETRGKSLEEIERKMMGRVPISAVVNIKPFSFNM.

This sequence belongs to the major facilitator superfamily. Sugar transporter (TC 2.A.1.1) family. Trehalose transporter subfamily.

The protein resides in the cell membrane. In terms of biological role, fails to transport trehalose. This is Facilitated trehalose transporter Tret1-2 homolog from Drosophila sechellia (Fruit fly).